The primary structure comprises 320 residues: Transcription factor NAI1 (320 aa).

Residues Thr-53–Val-105 are disordered. A compositionally biased stretch (low complexity) spans Thr-58–Ser-80. A compositionally biased stretch (polar residues) spans Gln-81–Val-105. The region spanning His-128–Leu-177 is the bHLH domain.

As to quaternary structure, homodimer. Expressed constitutively in roots, leaves, stems, and flowers.

The protein localises to the nucleus. In terms of biological role, transcription activator that regulates the expression of at least NAI2, PYK10 and PBP1. Required for and mediates the formation of endoplasmic reticulum bodies (ER bodies). Involved in the symbiotic interactions with the endophytes of the Sebacinaceae fungus family, such as Piriformospora indica and Sebacina. This is Transcription factor NAI1 (NAI1) from Arabidopsis thaliana (Mouse-ear cress).